The following is a 421-amino-acid chain: Acetylglutamate kinase (421 aa).

Positions 1 to 252 are acetylglutamate kinase; that stretch reads MASAKEISQY…PLESSVSITR (252 aa). Substrate-binding positions include 59 to 60, R81, and N170; that span reads AG. The region spanning 274-420 is the N-acetyltransferase domain; it reads ERVIRATTWK…HCTQHPPTLI (147 aa).

This sequence in the N-terminal section; belongs to the acetylglutamate kinase family. ArgB subfamily.

The protein localises to the cytoplasm. The enzyme catalyses N-acetyl-L-glutamate + ATP = N-acetyl-L-glutamyl 5-phosphate + ADP. It functions in the pathway amino-acid biosynthesis; L-arginine biosynthesis; N(2)-acetyl-L-ornithine from L-glutamate: step 2/4. The polypeptide is Acetylglutamate kinase (argB) (Xylella fastidiosa (strain Temecula1 / ATCC 700964)).